The sequence spans 367 residues: Molybdenum import ATP-binding protein ModC (367 aa).

One can recognise an ABC transporter domain in the interval 1-234; that stretch reads MSSAALEVRL…PALSGGFGHE (234 aa). 33–40 contacts ATP; sequence GPSGAGKS. The Mop domain occupies 293 to 366; sequence HISLHNILPV…IKSVAVDVLG (74 aa).

Belongs to the ABC transporter superfamily. Molybdate importer (TC 3.A.1.8) family. As to quaternary structure, the complex is composed of two ATP-binding proteins (ModC), two transmembrane proteins (ModB) and a solute-binding protein (ModA).

Its subcellular location is the cell inner membrane. It carries out the reaction molybdate(out) + ATP + H2O = molybdate(in) + ADP + phosphate + H(+). Part of the ABC transporter complex ModABC involved in molybdenum import. Responsible for energy coupling to the transport system. This Granulibacter bethesdensis (strain ATCC BAA-1260 / CGDNIH1) protein is Molybdenum import ATP-binding protein ModC.